The primary structure comprises 361 residues: uncharacterized protein (361 aa).

The N-terminal stretch at 1 to 19 (MNLVICVLLLSIWKNNCMT) is a signal peptide. The Extracellular portion of the chain corresponds to 20 to 47 (TNQTNGSSTTGDKPVESMQTKLNYLRRN). Asn-24 is a glycosylation site (N-linked (GlcNAc...) asparagine). The helical transmembrane segment at 48–68 (LLILVGIIIMVFVFICFCYLH) threads the bilayer. The Cytoplasmic portion of the chain corresponds to 69 to 361 (YNCLSDDASK…QVTSEVTLND (293 aa)). Positions 99–113 (AKTASQCSPETQPML) are enriched in polar residues. Disordered stretches follow at residues 99-184 (AKTA…KAHK), 209-247 (PPQLFKPLYSSHPQNEISPSKPFGPQELAKPPKHFNPKR), and 295-316 (QNLHVSSKVKSSSRSFRKLDSR). Residues 114–133 (STADKSSDSSSPERASAQSS) are compositionally biased toward low complexity. A compositionally biased stretch (polar residues) spans 141–150 (SSLQKPSIPN). Low complexity predominate over residues 299-308 (VSSKVKSSSR).

It is found in the membrane. This is an uncharacterized protein from Homo sapiens (Human).